Here is a 682-residue protein sequence, read N- to C-terminus: Guanylate cyclase soluble subunit beta-2 (682 aa).

Residue H43 participates in heme binding. Residues T408–E536 form the Guanylate cyclase domain. The tract at residues M592–S667 is disordered. The span at R649–S667 shows a compositional bias: polar residues.

This sequence belongs to the adenylyl cyclase class-4/guanylyl cyclase family. Heterodimer of an alpha and a beta chain. The cofactor is heme. In terms of tissue distribution, kidney and liver.

It localises to the cytoplasm. The catalysed reaction is GTP = 3',5'-cyclic GMP + diphosphate. Its activity is regulated as follows. Activated by nitric oxide in the presence of magnesium or manganese ions. The sequence is that of Guanylate cyclase soluble subunit beta-2 (Gucy1b2) from Rattus norvegicus (Rat).